Consider the following 606-residue polypeptide: Lysosomal cobalamin transporter ABCD4 (606 aa).

Positions 39 to 332 constitute an ABC transmembrane type-1 domain; the sequence is NALMFLTLLC…CFTQLIDLST (294 aa). Helical transmembrane passes span 43 to 63, 76 to 96, 190 to 210, 279 to 299, and 314 to 334; these read FLTLLCLTLLEQFVIYQVGLI, LEGFKTLTFLAVMLIVLNSTL, IFGYFILGTVVNKTLMGPIVM, YLGSILSYVVIAIPIFSGVYG, and AFVCIYLISCFTQLIDLSTTL. Residues 389–603 enclose the ABC transporter domain; it reads LERVSISAPS…GGGRWELMRI (215 aa). 421–428 serves as a coordination point for ATP; sequence GNTGTGKT.

It belongs to the ABC transporter superfamily. ABCD family. Peroxisomal fatty acyl CoA transporter (TC 3.A.1.203) subfamily. Homodimer or heterodimer. Interacts with LMBRD1; this interaction induces the translocation of ABCD4 from the ER to the lysosome membrane. Interacts with LMBRD1 and MMACHC; this interaction ensures the transport of cobalamin from the lysosome to the cytosol. In terms of tissue distribution, ubiquitous.

It localises to the endoplasmic reticulum membrane. It is found in the lysosome membrane. It catalyses the reaction an R-cob(III)alamin(out) + ATP + H2O = an R-cob(III)alamin(in) + ADP + phosphate + H(+). Lysosomal membrane protein that transports cobalamin (Vitamin B12) from the lysosomal lumen to the cytosol in an ATP-dependent manner. Targeted by LMBRD1 lysosomal chaperone from the endoplasmic reticulum to the lysosomal membrane. Then forms a complex with lysosomal chaperone LMBRD1 and cytosolic MMACHC to transport cobalamin across the lysosomal membrane. In Homo sapiens (Human), this protein is Lysosomal cobalamin transporter ABCD4.